The sequence spans 448 residues: Trigger factor (448 aa).

The 86-residue stretch at 160–245 (GDMLLMKVES…IQEIREEKLP (86 aa)) folds into the PPIase FKBP-type domain.

It belongs to the FKBP-type PPIase family. Tig subfamily.

It is found in the cytoplasm. The catalysed reaction is [protein]-peptidylproline (omega=180) = [protein]-peptidylproline (omega=0). Functionally, involved in protein export. Acts as a chaperone by maintaining the newly synthesized protein in an open conformation. Functions as a peptidyl-prolyl cis-trans isomerase. This is Trigger factor from Dehalococcoides mccartyi (strain ATCC BAA-2266 / KCTC 15142 / 195) (Dehalococcoides ethenogenes (strain 195)).